Reading from the N-terminus, the 156-residue chain is Ribonuclease P protein component (156 aa).

Residues 126-156 (GLRKLGVTPGGGRSPAPRAHSGARPRTDARS) are disordered.

The protein belongs to the RnpA family. Consists of a catalytic RNA component (M1 or rnpB) and a protein subunit.

The enzyme catalyses Endonucleolytic cleavage of RNA, removing 5'-extranucleotides from tRNA precursor.. Its function is as follows. RNaseP catalyzes the removal of the 5'-leader sequence from pre-tRNA to produce the mature 5'-terminus. It can also cleave other RNA substrates such as 4.5S RNA. The protein component plays an auxiliary but essential role in vivo by binding to the 5'-leader sequence and broadening the substrate specificity of the ribozyme. The protein is Ribonuclease P protein component of Nocardia farcinica (strain IFM 10152).